Here is a 223-residue protein sequence, read N- to C-terminus: Deoxyribose-phosphate aldolase (223 aa).

The active-site Proton donor/acceptor is aspartate 91. Lysine 154 serves as the catalytic Schiff-base intermediate with acetaldehyde. The active-site Proton donor/acceptor is lysine 183.

Belongs to the DeoC/FbaB aldolase family. DeoC type 1 subfamily.

It is found in the cytoplasm. The enzyme catalyses 2-deoxy-D-ribose 5-phosphate = D-glyceraldehyde 3-phosphate + acetaldehyde. The protein operates within carbohydrate degradation; 2-deoxy-D-ribose 1-phosphate degradation; D-glyceraldehyde 3-phosphate and acetaldehyde from 2-deoxy-alpha-D-ribose 1-phosphate: step 2/2. In terms of biological role, catalyzes a reversible aldol reaction between acetaldehyde and D-glyceraldehyde 3-phosphate to generate 2-deoxy-D-ribose 5-phosphate. In Geobacillus thermodenitrificans (strain NG80-2), this protein is Deoxyribose-phosphate aldolase.